A 904-amino-acid chain; its full sequence is Patched domain-containing protein 4 (904 aa).

The chain crosses the membrane as a helical span at residues 41-61 (HPVFFLTVPAVLTITFGLSAL). The N-linked (GlcNAc...) asparagine glycan is linked to Asn149. Residues 291–450 (TRSKVLVSLV…FSFFGSCLVF (160 aa)) enclose the SSD domain. A run of 6 helical transmembrane segments spans residues 295–312 (VLVSLVLILTTATLSSSM), 323–343 (GLLGVLTVCISIATAAGIFFI), 351–371 (TLLGIPFFAMGHGTKGVFELL), 394–414 (VMVTYTMTSSLYFITFGMGAS), 431–451 (VSILLNYFYIFSFFGSCLVFA), and 523–543 (PFVVILYLIYASFSFMGCLQI). Asn625 carries an N-linked (GlcNAc...) asparagine glycan. A run of 3 helical transmembrane segments spans residues 718-738 (PVLIAGFGVLLVLILTFFLVI), 744-764 (FWLILSVTSIELGVLGLMTLW), and 771-791 (ISILCLIYTLNFAIDHCAPLL). N-linked (GlcNAc...) asparagine glycosylation occurs at Asn820. The next 2 membrane-spanning stretches (helical) occupy residues 823 to 843 (SFLIGLLPLLFVPSNLTFTLF) and 845 to 865 (CLLLTGGCTLLHCFVILPVFL).

It belongs to the patched family.

It localises to the membrane. In terms of biological role, could act as a repressor of canonical hedgehog signaling by antagonizing the effects of SMO, as suggested by down-regulation of hedgehog target genes, including GLI1, PTCH1, and PTCH2 in PTCHD4-expressing cells. The sequence is that of Patched domain-containing protein 4 (Ptchd4) from Mus musculus (Mouse).